Consider the following 205-residue polypeptide: Large ribosomal subunit protein uL3 (205 aa).

It belongs to the universal ribosomal protein uL3 family. In terms of assembly, part of the 50S ribosomal subunit. Forms a cluster with proteins L14 and L19.

Functionally, one of the primary rRNA binding proteins, it binds directly near the 3'-end of the 23S rRNA, where it nucleates assembly of the 50S subunit. The chain is Large ribosomal subunit protein uL3 from Porphyromonas gingivalis (strain ATCC 33277 / DSM 20709 / CIP 103683 / JCM 12257 / NCTC 11834 / 2561).